The following is a 556-amino-acid chain: Formate--tetrahydrofolate ligase 1 (556 aa).

65–72 provides a ligand contact to ATP; it reads TPAGEGKS.

Belongs to the formate--tetrahydrofolate ligase family.

The catalysed reaction is (6S)-5,6,7,8-tetrahydrofolate + formate + ATP = (6R)-10-formyltetrahydrofolate + ADP + phosphate. It participates in one-carbon metabolism; tetrahydrofolate interconversion. This chain is Formate--tetrahydrofolate ligase 1, found in Streptococcus pyogenes serotype M28 (strain MGAS6180).